The primary structure comprises 380 residues: MSMDFSPLLTVLEGDFNKDNTSSATEIDTLENLDDTRQISKGKPPRHLTSSATRLQLAANADVDVCNLVMKSLDDKSEFLPVYRSGSCAEQGAKQFMEDEHICIDDLVNHLGAAIQCSSLGAFYGVFDGHGGTDAAHFVRKNILRFIVEDSSFPLCVKKAIKSAFLKADYEFADDSSLDISSGTTALTAFIFGRRLIIANAGDCRAVLGRRGRAIELSKDHKPNCTAEKVRIEKLGGVVYDGYLNGQLSVARAIGDWHMKGPKGSACPLSPEPELQETDLSEDDEFLIMGCDGLWDVMSSQCAVTIARKELMIHNDPERCSRELVREALKRNTCDNLTVIVVCFSPDPPQRIEIRMQSRVRRSISAEGLNLLKGVLDGYP.

The PPM-type phosphatase domain maps to 84 to 344 (RSGSCAEQGA…DNLTVIVVCF (261 aa)). Residues Asp128, Gly129, Asp292, and Asp335 each coordinate Mn(2+).

This sequence belongs to the PP2C family. Mg(2+) serves as cofactor. It depends on Mn(2+) as a cofactor. As to expression, expressed in roots, leaves, stems, flower, and trichomes.

The protein localises to the nucleus. The protein resides in the cytoplasm. The enzyme catalyses O-phospho-L-seryl-[protein] + H2O = L-seryl-[protein] + phosphate. It catalyses the reaction O-phospho-L-threonyl-[protein] + H2O = L-threonyl-[protein] + phosphate. In terms of biological role, confers salt tolerance by triggering the expression of stress-responsive genes. This Arabidopsis thaliana (Mouse-ear cress) protein is Probable protein phosphatase 2C 27.